Here is a 702-residue protein sequence, read N- to C-terminus: MADS-box MEF2 type transcription factor MIG1 (702 aa).

An MADS-box domain is found at 1 to 61; sequence MGRRKIEIKA…KKLYEYSSGD (61 aa). Disordered regions lie at residues 73–608 and 658–702; these read GGAT…NIDT and PSFL…KVDS. Acidic residues predominate over residues 86–96; the sequence is GGDDDDEEEGD. The segment covering 132 to 144 has biased composition (pro residues); that stretch reads ASPPIPNGVPFPP. Residues 145-155 are compositionally biased toward low complexity; the sequence is HGHGVPRGHTP. Residues 180-195 are compositionally biased toward polar residues; that stretch reads GSPQVNGFGFGQQQSM. Over residues 201 to 241 the composition is skewed to pro residues; the sequence is TTMPPHMPPQMAPGPPFPYPQHPQHPPHPPHPPHPPHPQQP. Composition is skewed to low complexity over residues 273-284, 326-343, and 350-371; these read PMGMQRHSVSPP, ESPQQIEPPQHQHQQQPE, and EQQQQQQQSQQSQQPQEPQSEP. Residues 456 to 465 show a composition bias toward polar residues; it reads VDESTSNASE. Composition is skewed to low complexity over residues 487–512 and 530–553; these read RASISSVSSAPESAPAPPSRSNSLRA and DGSGSATAESASSAQGGASTDATS. The span at 554–567 shows a compositional bias: polar residues; sequence QSTRQNDSHSSTNM. The segment covering 587–600 has biased composition (pro residues); the sequence is PPNPFAPKRPPQHP. Over residues 693-702 the composition is skewed to basic and acidic residues; the sequence is NEPKRVKVDS.

This sequence belongs to the MEF2 family. In terms of assembly, interacts with MAPK MPS1.

Its subcellular location is the nucleus. In terms of biological role, transcription factor acting downstream of the MPS1 MAP kinase (MAPK) cascade during conidiation and plant infection. Required for overcoming plant defense responses and the differentiation of secondary infectious hyphae in live plant cells. The sequence is that of MADS-box MEF2 type transcription factor MIG1 from Pyricularia oryzae (strain 70-15 / ATCC MYA-4617 / FGSC 8958) (Rice blast fungus).